The sequence spans 264 residues: Undecaprenyl-diphosphatase (264 aa).

8 helical membrane-spanning segments follow: residues M1–I21, Q39–F59, W87–I107, L111–A131, I144–T164, F187–L207, V208–V228, and I244–V264.

Belongs to the UppP family.

It is found in the cell inner membrane. The enzyme catalyses di-trans,octa-cis-undecaprenyl diphosphate + H2O = di-trans,octa-cis-undecaprenyl phosphate + phosphate + H(+). Catalyzes the dephosphorylation of undecaprenyl diphosphate (UPP). Confers resistance to bacitracin. In Teredinibacter turnerae (strain ATCC 39867 / T7901), this protein is Undecaprenyl-diphosphatase.